The following is a 357-amino-acid chain: Probable glutamine amidotransferase DUG3 (357 aa).

Cys2 serves as the catalytic For GATase activity. The region spanning 2-260 (CRFLIFKGKQ…PGEYRVERLD (259 aa)) is the Glutamine amidotransferase type-2 domain.

Belongs to the DUG3 family. In terms of assembly, component of the GSH degradosomal complex composed of at least DUG1, DUG2 and DUG3.

It localises to the cytoplasm. Component of the GSH degradosomal complex involved in the degradation of glutathione (GSH) and other peptides containing a gamma-glu-X bond. This is Probable glutamine amidotransferase DUG3 (DUG3) from Saccharomyces cerevisiae (strain ATCC 204508 / S288c) (Baker's yeast).